A 46-amino-acid chain; its full sequence is MKTTGSSVGGTKRKMWSRGVGGVVREQKAKLYIIRRCVVMLLCWHD.

Residues 8–24 form a helical membrane-spanning segment; sequence VGGTKRKMWSRGVGGVV. The segment at 15-46 is required for DVL/RTFL small polypeptide activity; sequence MWSRGVGGVVREQKAKLYIIRRCVVMLLCWHD.

Belongs to the DVL/RTFL small polypeptides family. Mostly expressed in roots and flowers, and, to a lower extent, in leaves and stems.

It localises to the cell membrane. Its function is as follows. Small polypeptide acting as a regulatory molecule which coordinates cellular responses required for differentiation, growth and development, including leaves shape, pedicule elongation, inflorescence organization and fruit maturation, probably by restricting polar cell proliferation in lateral organs and coordinating socket cell recruitment and differentiation at trichome sites. This is Small polypeptide DEVIL 5 from Arabidopsis thaliana (Mouse-ear cress).